We begin with the raw amino-acid sequence, 337 residues long: Eukaryotic translation initiation factor 3 subunit H (337 aa).

Residues 21-153 (VQCDGLAVMK…LKAYRLTPQA (133 aa)) enclose the MPN domain.

It belongs to the eIF-3 subunit H family. Component of the eukaryotic translation initiation factor 3 (eIF-3) complex. The eIF-3 complex interacts with pix. Interacts with mxt.

The protein resides in the cytoplasm. Functionally, component of the eukaryotic translation initiation factor 3 (eIF-3) complex, which is involved in protein synthesis of a specialized repertoire of mRNAs and, together with other initiation factors, stimulates binding of mRNA and methionyl-tRNAi to the 40S ribosome. The eIF-3 complex specifically targets and initiates translation of a subset of mRNAs involved in cell proliferation. In Drosophila grimshawi (Hawaiian fruit fly), this protein is Eukaryotic translation initiation factor 3 subunit H.